The sequence spans 1365 residues: Glucosyltransferase-S (1365 aa).

The or 37 signal peptide spans 1-36 (MEKNLRYKLHKVKKQWVAIGVTTVTLSFLAGGQVVA). Composition is skewed to polar residues over residues 80-89 (DQTATSQVSP) and 127-146 (RQSA…TSDQ). Disordered regions lie at residues 80–99 (DQTA…DNQV) and 127–152 (RQSA…HLET). Cell wall-binding repeat units follow at residues 146 to 166 (QPGH…NGQR) and 168 to 187 (KNYS…QTGE). A catalytic; approximate region spans residues 200–1000 (QDNVPDSYQA…KPIDPSVKIT (801 aa)). Cell wall-binding repeat units follow at residues 1052–1071 (ANGF…NGQE), 1073–1092 (KNRF…DGKM), 1093–1112 (ATGK…NGKQ), 1113–1133 (LKEG…NGRT), 1136–1159 (NKGF…DGTI), 1160–1179 (AIGL…YGYQ), 1234–1253 (LTGE…NGVQ), 1278–1298 (GKGW…SGQV), 1299–1318 (LTGL…KGIQ), and 1343–1362 (RDRW…NGLA).

It belongs to the glycosyl hydrolase 70 family.

It carries out the reaction [(1-&gt;6)-alpha-D-glucosyl](n) + sucrose = [(1-&gt;6)-alpha-D-glucosyl](n+1) + D-fructose. With respect to regulation, glucan synthesis by GTF-S is independent of primer glucan unlike GTF-I. Its function is as follows. Production of extracellular glucans, that are thought to play a key role in the development of the dental plaque because of their ability to adhere to smooth surfaces and mediate the aggregation of bacterial cells and food debris. This is Glucosyltransferase-S (gtfS) from Streptococcus downei (Streptococcus sobrinus).